A 341-amino-acid chain; its full sequence is UDP-glucose 4-epimerase (341 aa).

Belongs to the polysaccharide synthase family.

It catalyses the reaction UDP-alpha-D-glucose = UDP-alpha-D-galactose. Its function is as follows. Epimerizes UDP-galactose to UDP-glucose. The sequence is that of UDP-glucose 4-epimerase (capD) from Rickettsia akari (strain Hartford).